The following is a 650-amino-acid chain: p-hydroxybenzoic acid efflux pump subunit AaeB (650 aa).

Transmembrane regions (helical) follow at residues 7-27 (FPIKLTFALVAALMIGFHLNL), 32-52 (WAVMTAGIVAGGTAFAAGGDP), 61-81 (GILRIIGTFIGCVAALVIMIA), 87-107 (VVMLLLCCIWAGFCVWLSSLI), 115-135 (LGLAGYTALIIVVTANASGGL), 148-168 (EIILGILCAILADMIFSPRSI), 365-385 (LFWLYTGWTSGSGCMVMLGVI), 402-422 (FVYGMTVAVPLGALYFMYILP), 426-446 (QSAVLLCIAIGLLGFISGILI), 450-470 (QIGTLGAMVGTINVLVLDNPM), and 478-498 (IDNALGQWIGSFVALMVILLI).

This sequence belongs to the aromatic acid exporter ArAE (TC 2.A.85) family.

The protein resides in the cell inner membrane. Its function is as follows. Forms an efflux pump with AaeA. Could function as a metabolic relief valve, allowing to eliminate certain compounds when they accumulate to high levels in the cell. The chain is p-hydroxybenzoic acid efflux pump subunit AaeB from Pantoea ananatis (strain LMG 20103).